The primary structure comprises 372 residues: Cytochrome b (372 aa).

4 consecutive transmembrane segments (helical) span residues 25 to 45 (FGSM…FLAV), 69 to 90 (WMMQ…YIHM), 105 to 125 (WLSG…GYVL), and 170 to 190 (FFAL…LHIM). Positions 75 and 89 each coordinate heme b. Heme b is bound by residues His174 and His188. Residue His193 participates in a ubiquinone binding. 4 helical membrane passes run 218-238 (YKDL…ISFL), 280-300 (LGGA…PFTH), 312-332 (FMQL…WTAT), and 339-358 (YTTI…MSNL).

It belongs to the cytochrome b family. The cytochrome bc1 complex contains 3 respiratory subunits (MT-CYB, CYC1 and UQCRFS1), 2 core proteins (UQCRC1 and UQCRC2) and probably 6 low-molecular weight proteins. It depends on heme b as a cofactor.

It localises to the mitochondrion inner membrane. Its function is as follows. Component of the ubiquinol-cytochrome c reductase complex (complex III or cytochrome b-c1 complex) that is part of the mitochondrial respiratory chain. The b-c1 complex mediates electron transfer from ubiquinol to cytochrome c. Contributes to the generation of a proton gradient across the mitochondrial membrane that is then used for ATP synthesis. The chain is Cytochrome b (MT-CYB) from Sanzinia madagascariensis (Madagascar tree boa).